The primary structure comprises 56 residues: Small ribosomal subunit protein uS14 (56 aa).

Zn(2+) contacts are provided by C21, C24, C39, and C42.

It belongs to the universal ribosomal protein uS14 family. It depends on Zn(2+) as a cofactor.

The sequence is that of Small ribosomal subunit protein uS14 (RPS29) from Eremothecium gossypii (strain ATCC 10895 / CBS 109.51 / FGSC 9923 / NRRL Y-1056) (Yeast).